Reading from the N-terminus, the 162-residue chain is Thy-1 membrane glycoprotein (162 aa).

Positions 1 to 19 (MNPAISVALLLSVLQVSRG) are cleaved as a signal peptide. Glutamine 20 is subject to Pyrrolidone carboxylic acid. Residues 20 to 127 (QKVTSLTACL…NKSISVYRDK (108 aa)) enclose the Ig-like V-type domain. Intrachain disulfides connect cysteine 28–cysteine 131 and cysteine 38–cysteine 105. 3 N-linked (GlcNAc...) asparagine glycosylation sites follow: asparagine 42, asparagine 94, and asparagine 118. Cysteine 131 carries the GPI-anchor amidated cysteine; alternate lipid modification. The propeptide at 132-162 (GGISLLVQNTSWMLLLLLSLSLLQALDFISL) is removed in mature form.

It localises to the cell membrane. May play a role in cell-cell or cell-ligand interactions during synaptogenesis and other events in the brain. The protein is Thy-1 membrane glycoprotein (Thy1) of Mus musculus (Mouse).